Consider the following 418-residue polypeptide: eIF5-mimic protein 2-B (418 aa).

Over residues 1–15 the composition is skewed to polar residues; the sequence is MSYQKQQKPTLTGQR. A disordered region spans residues 1–29; it reads MSYQKQQKPTLTGQRFKTRKRDEKERFDP. The 168-residue stretch at 247-414 folds into the W2 domain; it reads NQQSLGARKE…KNAEEESESE (168 aa).

This sequence belongs to the BZW family.

In terms of biological role, translation initiation regulator which may repress repeat-associated non-AUG (RAN) initiated translation probably by acting as a competitive inhibitor of eukaryotic translation initiation factor 5 (EIF5) function. Enhances histone H4 gene transcription but does not seem to bind DNA directly. The sequence is that of eIF5-mimic protein 2-B (bzw1b) from Danio rerio (Zebrafish).